Consider the following 1139-residue polypeptide: Exportin-T (1139 aa).

Residues 562 to 589 (ARNKLRAAQGSGRTTPSSSDNVDLGPSS) form a disordered region. The span at 572-589 (SGRTTPSSSDNVDLGPSS) shows a compositional bias: polar residues.

The protein belongs to the exportin family.

It localises to the nucleus. It is found in the cytoplasm. TRNA nucleus export receptor which facilitates tRNA translocation across the nuclear pore complex. Involved in pre-tRNA splicing, probably by affecting the interaction of pre-tRNA with splicing endonuclease. This chain is Exportin-T (LOS1), found in Cryptococcus neoformans var. neoformans serotype D (strain B-3501A) (Filobasidiella neoformans).